A 239-amino-acid polypeptide reads, in one-letter code: Probable septum site-determining protein MinC (239 aa).

This sequence belongs to the MinC family. As to quaternary structure, interacts with MinD and FtsZ.

Functionally, cell division inhibitor that blocks the formation of polar Z ring septums. Rapidly oscillates between the poles of the cell to destabilize FtsZ filaments that have formed before they mature into polar Z rings. Prevents FtsZ polymerization. The polypeptide is Probable septum site-determining protein MinC (Colwellia psychrerythraea (strain 34H / ATCC BAA-681) (Vibrio psychroerythus)).